Consider the following 565-residue polypeptide: E3 ubiquitin-protein ligase ipaH7.8 (565 aa).

Positions 1-22 are disordered; it reads MFSVNNTHSSVSCSPSINSNST. Residues 1–262 are interaction with target proteins; it reads MFSVNNTHSS…YHGPQIYFSM (262 aa). A compositionally biased stretch (low complexity) spans 9–22; the sequence is SSVSCSPSINSNST. 9 LRR repeats span residues 58-79, 80-97, 98-119, 120-137, 138-157, 158-179, 180-199, 202-223, and 225-248; these read QEAV…PKHI, SALI…KLPA, FLKE…PESL, TTLS…VLPN, HLTS…ALPE, KLKF…PDKL, EILC…SDRN, RQKE…FSQL, and SSYR…QRLT. Residues 263–270 form a linker region; it reads SDGQQNTL. Residues 271 to 565 are E3 ubiquitin-protein ligase catalytic domain; the sequence is HRPLADAVTA…SENGSRLHHS (295 aa). One can recognise an NEL domain in the interval 273 to 565; the sequence is PLADAVTAWF…SENGSRLHHS (293 aa). Catalysis depends on C357, which acts as the Glycyl thioester intermediate.

This sequence belongs to the LRR-containing bacterial E3 ligase family. Post-translationally, ubiquitinated in the presence of host E1 ubiquitin-activating enzyme, E2 ubiquitin-conjugating enzyme and ubiquitin.

The protein resides in the secreted. It is found in the host cytoplasm. It carries out the reaction S-ubiquitinyl-[E2 ubiquitin-conjugating enzyme]-L-cysteine + [acceptor protein]-L-lysine = [E2 ubiquitin-conjugating enzyme]-L-cysteine + N(6)-ubiquitinyl-[acceptor protein]-L-lysine.. It participates in protein modification; protein ubiquitination. In terms of biological role, E3 ubiquitin ligase effector protein that interferes with host's innate immunity. Functions to alter host cell physiology and promote bacterial survival in host tissues. Catalyzes ubiquitination of human gasdermins GSDMB and GSDMD, promoting their degradation by the proteasome, thereby preventing cell death. In contrast, activates host cell pyroptosis in mouse cells: catalyzes ubiquitination of mouse Nlrp1b allele 1 protein, releasing the cleaved C-terminal part of Nlrp1b, which polymerizes and forms the Nlrp1b inflammasome followed by host cell pyroptosis. Does not catalyze ubiquitination of mouse GSDMD. This chain is E3 ubiquitin-protein ligase ipaH7.8, found in Shigella flexneri.